We begin with the raw amino-acid sequence, 269 residues long: Protein BASIC PENTACYSTEINE3 (269 aa).

This sequence belongs to the BBR/BPC family. In terms of tissue distribution, expressed in seedlings, leaves and pistils. Detected in the base of flowers and tips of carpels, in petal vasculature, in anthers, in young rosette, in the lateral and primary roots, and in the gynobasal portion of the ovule.

It localises to the nucleus. Functionally, transcriptional regulator that specifically binds to GA-rich elements (GAGA-repeats) present in regulatory sequences of genes involved in developmental processes. This chain is Protein BASIC PENTACYSTEINE3 (BPC3), found in Arabidopsis thaliana (Mouse-ear cress).